The chain runs to 330 residues: Biotin synthase (330 aa).

The region spanning 43-272 (FMGDKFDTCS…RAFLRFSGGR (230 aa)) is the Radical SAM core domain. Residues C61, C65, and C68 each coordinate [4Fe-4S] cluster. 4 residues coordinate [2Fe-2S] cluster: S105, C137, C197, and R267.

It belongs to the radical SAM superfamily. Biotin synthase family. As to quaternary structure, homodimer. Requires [4Fe-4S] cluster as cofactor. [2Fe-2S] cluster is required as a cofactor.

It carries out the reaction (4R,5S)-dethiobiotin + (sulfur carrier)-SH + 2 reduced [2Fe-2S]-[ferredoxin] + 2 S-adenosyl-L-methionine = (sulfur carrier)-H + biotin + 2 5'-deoxyadenosine + 2 L-methionine + 2 oxidized [2Fe-2S]-[ferredoxin]. It participates in cofactor biosynthesis; biotin biosynthesis; biotin from 7,8-diaminononanoate: step 2/2. In terms of biological role, catalyzes the conversion of dethiobiotin (DTB) to biotin by the insertion of a sulfur atom into dethiobiotin via a radical-based mechanism. The sequence is that of Biotin synthase from Porphyromonas gingivalis (strain ATCC 33277 / DSM 20709 / CIP 103683 / JCM 12257 / NCTC 11834 / 2561).